A 380-amino-acid chain; its full sequence is Succinyl-diaminopimelate desuccinylase (380 aa).

Residue histidine 68 participates in Zn(2+) binding. Residue aspartate 70 is part of the active site. Aspartate 101 is a binding site for Zn(2+). Residue glutamate 135 is the Proton acceptor of the active site. 3 residues coordinate Zn(2+): glutamate 136, glutamate 164, and histidine 350.

This sequence belongs to the peptidase M20A family. DapE subfamily. In terms of assembly, homodimer. Zn(2+) is required as a cofactor. Requires Co(2+) as cofactor.

The catalysed reaction is N-succinyl-(2S,6S)-2,6-diaminopimelate + H2O = (2S,6S)-2,6-diaminopimelate + succinate. It functions in the pathway amino-acid biosynthesis; L-lysine biosynthesis via DAP pathway; LL-2,6-diaminopimelate from (S)-tetrahydrodipicolinate (succinylase route): step 3/3. Catalyzes the hydrolysis of N-succinyl-L,L-diaminopimelic acid (SDAP), forming succinate and LL-2,6-diaminopimelate (DAP), an intermediate involved in the bacterial biosynthesis of lysine and meso-diaminopimelic acid, an essential component of bacterial cell walls. This chain is Succinyl-diaminopimelate desuccinylase, found in Tolumonas auensis (strain DSM 9187 / NBRC 110442 / TA 4).